Here is a 523-residue protein sequence, read N- to C-terminus: UDP-N-acetylmuramyl-tripeptide synthetase (523 aa).

Residue Ser-38 coordinates UDP-N-acetyl-alpha-D-muramoyl-L-alanyl-D-glutamate. Position 116 to 122 (116 to 122 (GTKGKTT)) interacts with ATP. UDP-N-acetyl-alpha-D-muramoyl-L-alanyl-D-glutamate contacts are provided by residues 162 to 163 (TT), Ser-189, and Arg-197. An N6-carboxylysine modification is found at Lys-231.

This sequence belongs to the MurCDEF family. MurE subfamily. Post-translationally, carboxylation is probably crucial for Mg(2+) binding and, consequently, for the gamma-phosphate positioning of ATP.

It is found in the cytoplasm. It participates in cell wall biogenesis; peptidoglycan biosynthesis. Its function is as follows. Catalyzes the addition of an amino acid to the nucleotide precursor UDP-N-acetylmuramoyl-L-alanyl-D-glutamate (UMAG) in the biosynthesis of bacterial cell-wall peptidoglycan. This chain is UDP-N-acetylmuramyl-tripeptide synthetase, found in Lactobacillus acidophilus (strain ATCC 700396 / NCK56 / N2 / NCFM).